We begin with the raw amino-acid sequence, 360 residues long: Tyrosine-protein phosphatase non-receptor type 7 (360 aa).

The disordered stretch occupies residues Met1–Arg37. The segment at Leu38 to Asp51 is interaction with MAP kinases. The residue at position 44 (Ser44) is a Phosphoserine. The residue at position 66 (Thr66) is a Phosphothreonine. Residues Ser93, Ser110, and Ser143 each carry the phosphoserine modification. The 254-residue stretch at Leu97 to Tyr350 folds into the Tyrosine-protein phosphatase domain. Residues Asp257, Cys291–Arg297, and Gln335 each bind substrate. Cys291 acts as the Phosphocysteine intermediate in catalysis. At Cys291 the chain carries Cysteine sulfenic acid (-SOH).

It belongs to the protein-tyrosine phosphatase family. Non-receptor class subfamily. In terms of assembly, monomer. Interacts with MAPK1, MAPK3 and several other MAP kinases. In terms of processing, phosphorylated on serine residues in resting T-cells. Phosphorylation increases upon exposure to stimuli that increase intracellular cAMP levels. Phosphorylation leads to dissociation of bound MAP kinases. Oxidized at active site cysteine. Treatment with pervanadate (vanadate and H(2)O(2)) or with antigen enhanced oxidation of active site cysteine. As to expression, expressed exclusively in thymus and spleen.

The protein resides in the cytoplasm. It localises to the cytoskeleton. The catalysed reaction is O-phospho-L-tyrosyl-[protein] + H2O = L-tyrosyl-[protein] + phosphate. Its activity is regulated as follows. Inhibited in cells after FCER1A triggering. Its function is as follows. Protein phosphatase that acts preferentially on tyrosine-phosphorylated MAPK1. Plays a role in the regulation of T and B-lymphocyte development and signal transduction. In Homo sapiens (Human), this protein is Tyrosine-protein phosphatase non-receptor type 7 (PTPN7).